Here is a 322-residue protein sequence, read N- to C-terminus: Nodulation protein Z (322 aa).

A GT23 domain is found at methionine 1 to glutamate 314.

The protein belongs to the glycosyltransferase 23 family.

In terms of biological role, fucosyltransferase which adds the fucose moiety of the nod factor on its terminal reducing N-acetylglucosamine end. Uses GDP-fucose as the donor group. This is Nodulation protein Z (nodZ) from Sinorhizobium fredii (strain NBRC 101917 / NGR234).